We begin with the raw amino-acid sequence, 120 residues long: Large ribosomal subunit protein bL20 (120 aa).

It belongs to the bacterial ribosomal protein bL20 family.

Functionally, binds directly to 23S ribosomal RNA and is necessary for the in vitro assembly process of the 50S ribosomal subunit. It is not involved in the protein synthesizing functions of that subunit. The chain is Large ribosomal subunit protein bL20 from Desulforudis audaxviator (strain MP104C).